Here is a 163-residue protein sequence, read N- to C-terminus: Cyanate hydratase (163 aa).

Catalysis depends on residues arginine 103, glutamate 106, and serine 129.

It belongs to the cyanase family.

It carries out the reaction cyanate + hydrogencarbonate + 3 H(+) = NH4(+) + 2 CO2. Catalyzes the reaction of cyanate with bicarbonate to produce ammonia and carbon dioxide. In Talaromyces stipitatus (strain ATCC 10500 / CBS 375.48 / QM 6759 / NRRL 1006) (Penicillium stipitatum), this protein is Cyanate hydratase.